A 968-amino-acid chain; its full sequence is MPFTLGQRWISDTESELGLGTVVAIDARMVTLLFPATGENRLYARNDSPVTRVMFNPGDTVTSHEGWQLKVDEVKEENGLLIYIGTRLDTLEENVALREVFLDSKLVFSKPQDRLFAGQIDRMDRFALRYRARKYQSEQYRMPWSGLRGQRTNLIPHQLNIANDVGRRHAPRVLLADEVGLGKTIEAGMIIHQQLLAGAAERVLIVVPETLQHQWLVEMLRRFNLRFSLFDDERYAEAQHESDNPFDTEQLVICSLDFVRRNKQRLEHLCDAEWDLLVVDEAHHLVWSEDAPSREYQAIEQLAERVPGVLLLTATPEQLGMESHFARLRLLDPNRFHDFAQFVEEQQNYRPVADAVALLLAGTHLSDEQLNTLSELIGEQDIEPLLQTANSDRDGAESARQELVSMLMDRHGTSRVLFRNTRNGVKGFPQRELHTIKLPLPTQYQTAIKVSGIMGARKSAEERARDMLYPEQIYQEFEGDSGTWWNFDPRVEWLMGYLTSHRSQKVLVICAKAATALQLEQVLREREGIRAAVFHEGMSIIERDRAAAWFAEEDTGAQVLLCSEIGSEGRNFQFASQLVMFDLPFNPDLLEQRIGRLDRIGQAHDIQIHVPYLEKTAQSVLVRWYHEGLDAFEHTCPTGRAIYDSVYEQLIGYLAAPENTEGFDALIQACRKQHDELKAQLEQGRDRLLEIHSNGGEKAQQLADAIAEQDDDTGLVNFAMNLFDIVGINQDDRGEHMIVLTPSDHMLVPDFPGLPEDGCTITFNRDVALSREDAQFITWEHPLIRNGLDLILSGDTGSCTISLLKNKALPVGTLLLELIYVVEAKAPKQLQLNRFLPPTPVRMLLDKNGNNLAGQVEFESFNRQLSAVNRHTGSKLVNAVQQEVHAILQGGEAQVEKAARELIDAARQEADDKLSAELSRLEALRAVNPNIRDDELAAIEHNRQQVLENLNQASWRLDALRLIVVTHQ.

The Helicase ATP-binding domain maps to 164–334 (DVGRRHAPRV…FARLRLLDPN (171 aa)). 177 to 184 (DEVGLGKT) contributes to the ATP binding site. The short motif at 280–283 (DEAH) is the DEAH box element. The Helicase C-terminal domain occupies 490–662 (RVEWLMGYLT…YLAAPENTEG (173 aa)).

The protein belongs to the SNF2/RAD54 helicase family. RapA subfamily. Interacts with the RNAP. Has a higher affinity for the core RNAP than for the holoenzyme. Its ATPase activity is stimulated by binding to RNAP.

In terms of biological role, transcription regulator that activates transcription by stimulating RNA polymerase (RNAP) recycling in case of stress conditions such as supercoiled DNA or high salt concentrations. Probably acts by releasing the RNAP, when it is trapped or immobilized on tightly supercoiled DNA. Does not activate transcription on linear DNA. Probably not involved in DNA repair. The polypeptide is RNA polymerase-associated protein RapA (Cronobacter sakazakii (strain ATCC BAA-894) (Enterobacter sakazakii)).